A 234-amino-acid chain; its full sequence is Glutathione S-transferase U11 (234 aa).

Positions 11 to 90 (EYVKLLGAWP…YVDETWLSGP (80 aa)) constitute a GST N-terminal domain. Glutathione is bound by residues 21-22 (SP), 47-48 (LS), 61-62 (QI), and 74-75 (ES). In terms of domain architecture, GST C-terminal spans 96 to 228 (DPFDRAVARF…KLVQFARLKF (133 aa)).

Belongs to the GST superfamily. Tau family.

It localises to the cytoplasm. It is found in the cytosol. The catalysed reaction is RX + glutathione = an S-substituted glutathione + a halide anion + H(+). In terms of biological role, may be involved in the conjugation of reduced glutathione to a wide number of exogenous and endogenous hydrophobic electrophiles and have a detoxification role against certain herbicides. This chain is Glutathione S-transferase U11 (GSTU11), found in Arabidopsis thaliana (Mouse-ear cress).